The sequence spans 253 residues: Ciliary microtubule associated protein 1B (253 aa).

The stretch at 182-207 (PGPCAYQVVSPGVYKSRAPQFTILAR) is one STPGR repeat.

The protein belongs to the CIMAP family.

Its subcellular location is the cell projection. It is found in the cilium. The protein localises to the flagellum. In Homo sapiens (Human), this protein is Ciliary microtubule associated protein 1B.